Here is an 84-residue protein sequence, read N- to C-terminus: UPF0473 protein CKL_1327 (84 aa).

It belongs to the UPF0473 family.

The protein is UPF0473 protein CKL_1327 of Clostridium kluyveri (strain ATCC 8527 / DSM 555 / NBRC 12016 / NCIMB 10680 / K1).